Here is a 354-residue protein sequence, read N- to C-terminus: CX3C chemokine receptor 1 (354 aa).

At methionine 1–threonine 32 the chain is on the extracellular side. Residues isoleucine 33–serine 60 traverse the membrane as a helical segment. At arginine 61–tyrosine 70 the chain is on the cytoplasmic side. The helical transmembrane segment at leucine 71–tyrosine 91 threads the bilayer. At leucine 92–lysine 104 the chain is on the extracellular side. An intrachain disulfide couples cysteine 103 to cysteine 176. Residues leucine 105 to isoleucine 126 traverse the membrane as a helical segment. Residues aspartate 127–threonine 143 lie on the Cytoplasmic side of the membrane. Residues valine 144–phenylalanine 168 form a helical membrane-spanning segment. Topologically, residues threonine 169–valine 196 are extracellular. The chain crosses the membrane as a helical span at residues asparagine 197–valine 216. Over arginine 217–arginine 232 the chain is Cytoplasmic. The helical transmembrane segment at leucine 233–leucine 257 threads the bilayer. The Extracellular portion of the chain corresponds to lysine 258 to tryptophan 274. A helical membrane pass occupies residues alanine 275–glycine 298. Residues glutamate 299–leucine 354 lie on the Cytoplasmic side of the membrane. Threonine 345 bears the Phosphothreonine mark.

The protein belongs to the G-protein coupled receptor 1 family. As to quaternary structure, found in a ternary complex with CX3CL1 and ITGAV:ITGB3 or ITGA4:ITGB1. In terms of processing, this protein is not N-glycosylated which is unusual for G-protein-coupled receptors. In terms of tissue distribution, most abundant in adult spinal cord, brain, kidney, gut, uterus and testes.

Its subcellular location is the cell membrane. Functionally, receptor for the C-X3-C chemokine fractalkine (CX3CL1) present on many early leukocyte cells; CX3CR1-CX3CL1 signaling exerts distinct functions in different tissue compartments, such as immune response, inflammation, cell adhesion and chemotaxis. CX3CR1-CX3CL1 signaling mediates cell migratory functions. Responsible for the recruitment of natural killer (NK) cells to inflamed tissues. Acts as a regulator of inflammation process leading to atherogenesis by mediating macrophage and monocyte recruitment to inflamed atherosclerotic plaques, promoting cell survival. Involved in airway inflammation by promoting interleukin 2-producing T helper (Th2) cell survival in inflamed lung. Involved in the migration of circulating monocytes to non-inflamed tissues, where they differentiate into macrophages and dendritic cells. Acts as a negative regulator of angiogenesis, probably by promoting macrophage chemotaxis. Plays a key role in brain microglia by regulating inflammatory response in the central nervous system (CNS) and regulating synapse maturation. Required to restrain the microglial inflammatory response in the CNS and the resulting parenchymal damage in response to pathological stimuli. Involved in brain development by participating in synaptic pruning, a natural process during which brain microglia eliminates extra synapses during postnatal development. Synaptic pruning by microglia is required to promote the maturation of circuit connectivity during brain development. Acts as an important regulator of the gut microbiota by controlling immunity to intestinal bacteria and fungi. Expressed in lamina propria dendritic cells in the small intestine, which form transepithelial dendrites capable of taking up bacteria in order to provide defense against pathogenic bacteria. Required to initiate innate and adaptive immune responses against dissemination of commensal fungi (mycobiota) component of the gut: expressed in mononuclear phagocytes (MNPs) and acts by promoting induction of antifungal IgG antibodies response to confer protection against disseminated C.albicans or C.auris infection. Also acts as a receptor for C-C motif chemokine CCL26, inducing cell chemotaxis. The protein is CX3C chemokine receptor 1 of Rattus norvegicus (Rat).